The sequence spans 535 residues: Peroxisomal membrane protein PEX29 (535 aa).

2 helical membrane passes run 139 to 159 and 176 to 196; these read LSVP…SKPL and ILLL…PAYM. Asn239 carries N-linked (GlcNAc...) asparagine glycosylation. Residues 247 to 267 form a helical membrane-spanning segment; the sequence is MLLYVMSYDFVTSLIVKYLYF. An N-linked (GlcNAc...) asparagine glycan is attached at Asn271. The next 2 membrane-spanning stretches (helical) occupy residues 272 to 292 and 297 to 317; these read ITIF…LFGA and AMLP…TIAM. N-linked (GlcNAc...) asparagine glycosylation is found at Asn450 and Asn515. The segment at 511–535 is disordered; sequence AHRRNKSMESSNSLHPVKSIDSVDG.

This sequence belongs to the PEX28-32 family. PEX29 subfamily.

The protein localises to the endoplasmic reticulum membrane. In terms of biological role, with PEX23, contributes to the formation of endoplasmic reticulum-mitochondria junctions which are important for mitochondrial function. Involved in lipid dropplets formation. This chain is Peroxisomal membrane protein PEX29, found in Ogataea parapolymorpha (strain ATCC 26012 / BCRC 20466 / JCM 22074 / NRRL Y-7560 / DL-1) (Yeast).